The chain runs to 179 residues: Large ribosomal subunit protein bL17 (179 aa).

A disordered region spans residues 123 to 179; the sequence is RTRGTDTLPDTVTDTGPDSAPDPVPGSEPGSAAGDLPDADTAPADPGESSSNQRVIR. Residues 154–168 show a composition bias toward low complexity; that stretch reads AAGDLPDADTAPADP. The segment covering 170–179 has biased composition (polar residues); it reads ESSSNQRVIR.

The protein belongs to the bacterial ribosomal protein bL17 family. In terms of assembly, part of the 50S ribosomal subunit. Contacts protein L32.

In Tropheryma whipplei (strain Twist) (Whipple's bacillus), this protein is Large ribosomal subunit protein bL17.